The sequence spans 447 residues: MKKQYFGTDGIRGEVGKFPIVPEFMTRLGYAAGKVLTKDAKPHERCKVLIGKDTRVSGYLLEAALEAGFAAAGVDVMLCGPIPTPGVAYLTKALRLSAGVVISASHNPYQDNGIKFFSAKGDKLSDDFELAIEAELENPIGCVSSKELGKAFRLDDAAGRYIEFCKSTFPGDLNLKGLKLVVDCANGAAYHTAPHVFHELGAEVISIGVSPDGRNINDGCGATAPAALIAKVKEEGADLGIALDGDADRLQMVDSTGRLFNGDELLYVLAKDRIDRGQQLGGVIGTLMTNLAIENAIKGLGIGFERANVGDRYVLELLKQKGWLIGGEGSGHLLCLDQHSTGDGTIAALQVLAAMSQNKKSLSELLNTVKIFPQVLLNVKLKPSYDWKSDEVLNKQITKVEADLKDAGRVLIRASGTEPLLRVMVETQSADVAMNAAKSIADLVPTP.

The Phosphoserine intermediate role is filled by serine 105. The Mg(2+) site is built by serine 105, aspartate 244, aspartate 246, and aspartate 248. Position 105 is a phosphoserine (serine 105).

Belongs to the phosphohexose mutase family. Mg(2+) is required as a cofactor. In terms of processing, activated by phosphorylation.

It catalyses the reaction alpha-D-glucosamine 1-phosphate = D-glucosamine 6-phosphate. Functionally, catalyzes the conversion of glucosamine-6-phosphate to glucosamine-1-phosphate. This Polynucleobacter asymbioticus (strain DSM 18221 / CIP 109841 / QLW-P1DMWA-1) (Polynucleobacter necessarius subsp. asymbioticus) protein is Phosphoglucosamine mutase.